We begin with the raw amino-acid sequence, 95 residues long: Integration host factor subunit beta (95 aa).

Belongs to the bacterial histone-like protein family. Heterodimer of an alpha and a beta chain.

Its function is as follows. This protein is one of the two subunits of integration host factor, a specific DNA-binding protein that functions in genetic recombination as well as in transcriptional and translational control. The chain is Integration host factor subunit beta from Psychromonas ingrahamii (strain DSM 17664 / CCUG 51855 / 37).